The chain runs to 43 residues: Ferritin light chain (43 aa).

The Ferritin-like diiron domain maps to 1–43 (MEAALLVEKNLNQALLDLHGLASARGDPHICDFLENHFLDEEV).

This sequence belongs to the ferritin family. As to quaternary structure, oligomer of 24 subunits. There are two types of subunits: L (light) chain and H (heavy) chain. The major chain can be light or heavy, depending on the species and tissue type. The functional molecule forms a roughly spherical shell with a diameter of 12 nm and contains a central cavity into which the insoluble mineral iron core is deposited. Interacts with NCOA4.

The protein resides in the cytoplasmic vesicle. It localises to the autophagosome. It is found in the cytoplasm. Its subcellular location is the autolysosome. Stores iron in a soluble, non-toxic, readily available form. Important for iron homeostasis. Iron is taken up in the ferrous form and deposited as ferric hydroxides after oxidation. Also plays a role in delivery of iron to cells. Mediates iron uptake in capsule cells of the developing kidney. Delivery to lysosomes by the cargo receptor NCOA4 for autophagic degradation and release or iron. In Ovis aries (Sheep), this protein is Ferritin light chain (FTL).